The following is a 69-amino-acid chain: Sec-independent protein translocase protein TatA (69 aa).

A helical membrane pass occupies residues 1-21 (MFGLGGQELVLILLIVLLLFG). Positions 47-63 (EEEFNKSMDDNPKKEKA) are enriched in basic and acidic residues. The disordered stretch occupies residues 47–69 (EEEFNKSMDDNPKKEKATTASKS).

The protein belongs to the TatA/E family. Forms a complex with TatC.

It localises to the cell inner membrane. Part of the twin-arginine translocation (Tat) system that transports large folded proteins containing a characteristic twin-arginine motif in their signal peptide across membranes. TatA could form the protein-conducting channel of the Tat system. In Chlorobium chlorochromatii (strain CaD3), this protein is Sec-independent protein translocase protein TatA.